The sequence spans 215 residues: Peroxiredoxin (215 aa).

The Thioredoxin domain maps to 3 to 158; the sequence is PLLGDNFPEI…ILRAVKALQV (156 aa). The Cysteine sulfenic acid (-SOH) intermediate role is filled by cysteine 45. Arginine 121 contacts substrate. A disulfide bridge links cysteine 205 with cysteine 211.

The protein belongs to the peroxiredoxin family. Prx6 subfamily. As to quaternary structure, homodecamer. Pentamer of dimers that assemble into a ring structure.

It is found in the cytoplasm. It carries out the reaction a hydroperoxide + [thioredoxin]-dithiol = an alcohol + [thioredoxin]-disulfide + H2O. Its function is as follows. Thiol-specific peroxidase that catalyzes the reduction of hydrogen peroxide and organic hydroperoxides to water and alcohols, respectively. Plays a role in cell protection against oxidative stress by detoxifying peroxides. This Archaeoglobus fulgidus (strain ATCC 49558 / DSM 4304 / JCM 9628 / NBRC 100126 / VC-16) protein is Peroxiredoxin.